A 316-amino-acid chain; its full sequence is Homoserine kinase (316 aa).

Residue P96–A106 participates in ATP binding.

This sequence belongs to the GHMP kinase family. Homoserine kinase subfamily.

The protein localises to the cytoplasm. The catalysed reaction is L-homoserine + ATP = O-phospho-L-homoserine + ADP + H(+). It functions in the pathway amino-acid biosynthesis; L-threonine biosynthesis; L-threonine from L-aspartate: step 4/5. Catalyzes the ATP-dependent phosphorylation of L-homoserine to L-homoserine phosphate. This Clavibacter michiganensis subsp. michiganensis (strain NCPPB 382) protein is Homoserine kinase.